The chain runs to 305 residues: tRNA pseudouridine synthase B (305 aa).

Asp-48 serves as the catalytic Nucleophile.

Belongs to the pseudouridine synthase TruB family. Type 1 subfamily.

It carries out the reaction uridine(55) in tRNA = pseudouridine(55) in tRNA. In terms of biological role, responsible for synthesis of pseudouridine from uracil-55 in the psi GC loop of transfer RNAs. The protein is tRNA pseudouridine synthase B of Pseudomonas putida (strain GB-1).